The sequence spans 173 residues: MKRKEIIDDVTMKRAITRITYEIIERNKNLDNIVLAGIKTRGVFLAKRIQERLKQLENLDIPVGELDTKPFRDDMKVEVDTTTMPVDITDKDIILIDDVLYTGRTIRAAIDNLVSLGRPSRVSLAVLIDRGHRELPIRADYVGKNIPTSQFEEILVEVMEHDGYDRVSIIDPS.

Positions Ile93–Thr105 match the PRPP-binding motif.

The protein belongs to the purine/pyrimidine phosphoribosyltransferase family. PyrR subfamily. Homodimer and homohexamer; in equilibrium.

The catalysed reaction is UMP + diphosphate = 5-phospho-alpha-D-ribose 1-diphosphate + uracil. Its function is as follows. Regulates transcriptional attenuation of the pyrimidine nucleotide (pyr) operon by binding in a uridine-dependent manner to specific sites on pyr mRNA. This disrupts an antiterminator hairpin in the RNA and favors formation of a downstream transcription terminator, leading to a reduced expression of downstream genes. Also displays a weak uracil phosphoribosyltransferase activity which is not physiologically significant. The chain is Bifunctional protein PyrR from Streptococcus agalactiae serotype Ia (strain ATCC 27591 / A909 / CDC SS700).